The sequence spans 423 residues: MERYTDLVISKIPELGFTNLLCHIYSLAGLCSNIDVSKFLTNCNGYVVEKYDKSTTAGKVSCIPIGMMLELVESGHLSRPNSSDELDQKKELTDELKTRYHSIYDVFELPTSIPLAYFFKPRLREKVSKAIDFSQMDLKIDDLSRKGIHTGENPKVVKMKIEPERGAWMSNRSIKNLVSQFAYGSEVDYIGQFDMRFLNSLAIHEKFDAFMNKHILSYILKDKIKSSTSRFVMFGFCYLSHWKCVIYDKKQCLVSFYDSGGNIPTEFHHYNNFYFYSFSDGFNTNHKHSVLDNTNCDIDVLFRFFECTFGAKIGCINVEVNQLLESECGMFISLFMILCTRTPPKSFKSLKKVYTFFKFLADKKMTLFKSILFNLHDLSLDITETDNAGLKEYKRMEKWTKKSINVICDKLTTKLNRIVNDDE.

Residues His-241, Asp-248, and Cys-328 contribute to the active site.

This sequence belongs to the peptidase C57 family.

It is found in the virion. Its function is as follows. Late protein responsible for processing most or all of the viral core and membrane proteins known to undergo morphogenesis-associated proteolysis. These proteolytic events are involved in the transformation of immature virions (IV) into mature virions (MV). Probably cleaves at least the OPG129/A3, OPG136/A10, OPG098/L4, and OPG144/A17 precursors preferentially at Ala-Gly-|-Ala motifs. Also seems to process Ala-Gly-|-Ser and Ala-Gly-|-Thr motifs. The protein is Core protease OPG083 (OPG083) of Bos taurus (Bovine).